The sequence spans 757 residues: Xaa-Pro dipeptidyl-peptidase (757 aa).

Catalysis depends on charge relay system residues Ser348, Asp468, and His498.

The protein belongs to the peptidase S15 family. As to quaternary structure, homodimer.

The protein resides in the cytoplasm. It carries out the reaction Hydrolyzes Xaa-Pro-|- bonds to release unblocked, N-terminal dipeptides from substrates including Ala-Pro-|-p-nitroanilide and (sequentially) Tyr-Pro-|-Phe-Pro-|-Gly-Pro-|-Ile.. Functionally, removes N-terminal dipeptides sequentially from polypeptides having unsubstituted N-termini provided that the penultimate residue is proline. This is Xaa-Pro dipeptidyl-peptidase from Streptococcus pneumoniae (strain P1031).